The sequence spans 672 residues: DNA ligase (672 aa).

NAD(+)-binding positions include 34-38 (DAEYD), 83-84 (SL), and glutamate 117. The active-site N6-AMP-lysine intermediate is lysine 119. NAD(+)-binding residues include arginine 140, glutamate 177, lysine 293, and lysine 317. Positions 411, 414, 429, and 434 each coordinate Zn(2+). The 82-residue stretch at 591–672 (RVGGRFTGKT…FLAMLGVCRT (82 aa)) folds into the BRCT domain.

This sequence belongs to the NAD-dependent DNA ligase family. LigA subfamily. Requires Mg(2+) as cofactor. Mn(2+) serves as cofactor.

It carries out the reaction NAD(+) + (deoxyribonucleotide)n-3'-hydroxyl + 5'-phospho-(deoxyribonucleotide)m = (deoxyribonucleotide)n+m + AMP + beta-nicotinamide D-nucleotide.. Its function is as follows. DNA ligase that catalyzes the formation of phosphodiester linkages between 5'-phosphoryl and 3'-hydroxyl groups in double-stranded DNA using NAD as a coenzyme and as the energy source for the reaction. It is essential for DNA replication and repair of damaged DNA. The polypeptide is DNA ligase (Geotalea uraniireducens (strain Rf4) (Geobacter uraniireducens)).